A 546-amino-acid chain; its full sequence is CTP synthase (546 aa).

The tract at residues 1 to 264 (MRYIVVTGGV…TKYIMKAMRL (264 aa)) is amidoligase domain. S12 is a CTP binding site. S12 contacts UTP. Residues 13-18 (GLGKGI) and D70 each bind ATP. 2 residues coordinate Mg(2+): D70 and E140. CTP-binding positions include 147–149 (DIE), 185–190 (KTKPTQ), and K221. Residues 185 to 190 (KTKPTQ) and K221 contribute to the UTP site. The Glutamine amidotransferase type-1 domain occupies 298 to 534 (GSQCTDPMKD…VEAMKAQRLR (237 aa)). G357 contacts L-glutamine. Residue C384 is the Nucleophile; for glutamine hydrolysis of the active site. Residues 385–388 (FGMQ), E408, and R464 contribute to the L-glutamine site. Residues H507 and E509 contribute to the active site.

It belongs to the CTP synthase family. Homotetramer.

It catalyses the reaction UTP + L-glutamine + ATP + H2O = CTP + L-glutamate + ADP + phosphate + 2 H(+). The catalysed reaction is L-glutamine + H2O = L-glutamate + NH4(+). The enzyme catalyses UTP + NH4(+) + ATP = CTP + ADP + phosphate + 2 H(+). Its pathway is pyrimidine metabolism; CTP biosynthesis via de novo pathway; CTP from UDP: step 2/2. Its activity is regulated as follows. Allosterically activated by GTP, when glutamine is the substrate; GTP has no effect on the reaction when ammonia is the substrate. The allosteric effector GTP functions by stabilizing the protein conformation that binds the tetrahedral intermediate(s) formed during glutamine hydrolysis. Inhibited by the product CTP, via allosteric rather than competitive inhibition. Catalyzes the ATP-dependent amination of UTP to CTP with either L-glutamine or ammonia as the source of nitrogen. Regulates intracellular CTP levels through interactions with the four ribonucleotide triphosphates. This is CTP synthase from Methanothrix thermoacetophila (strain DSM 6194 / JCM 14653 / NBRC 101360 / PT) (Methanosaeta thermophila).